Reading from the N-terminus, the 512-residue chain is Phosphoenolpyruvate carboxylase (512 aa).

It belongs to the PEPCase type 2 family. As to quaternary structure, homotetramer. Mg(2+) serves as cofactor.

The catalysed reaction is oxaloacetate + phosphate = phosphoenolpyruvate + hydrogencarbonate. In terms of biological role, catalyzes the irreversible beta-carboxylation of phosphoenolpyruvate (PEP) to form oxaloacetate (OAA), a four-carbon dicarboxylic acid source for the tricarboxylic acid cycle. The polypeptide is Phosphoenolpyruvate carboxylase (Caldivirga maquilingensis (strain ATCC 700844 / DSM 13496 / JCM 10307 / IC-167)).